Consider the following 324-residue polypeptide: Glyoxylate/hydroxypyruvate reductase B (324 aa).

Residues Arg237 and Glu266 contribute to the active site. The Proton donor role is filled by His285.

The protein belongs to the D-isomer specific 2-hydroxyacid dehydrogenase family. GhrB subfamily. As to quaternary structure, homodimer.

It is found in the cytoplasm. It carries out the reaction glycolate + NADP(+) = glyoxylate + NADPH + H(+). It catalyses the reaction (R)-glycerate + NAD(+) = 3-hydroxypyruvate + NADH + H(+). The enzyme catalyses (R)-glycerate + NADP(+) = 3-hydroxypyruvate + NADPH + H(+). In terms of biological role, catalyzes the NADPH-dependent reduction of glyoxylate and hydroxypyruvate into glycolate and glycerate, respectively. In Salmonella gallinarum (strain 287/91 / NCTC 13346), this protein is Glyoxylate/hydroxypyruvate reductase B.